The primary structure comprises 1099 residues: Adenylate cyclase type 7 (1099 aa).

Residues 1–33 (MPAKGRYFLNEGDEGPDQAALYEKYRLTSLHGP) lie on the Cytoplasmic side of the membrane. A run of 6 helical transmembrane segments spans residues 34-54 (LLLL…SIAF), 63-83 (QVVL…YVLV), 95-117 (ALAL…DSLE), 122-142 (AWEQ…LLPL), 147-167 (AIVA…AVTR), and 178-198 (LGLQ…TGAF). Residues 199 to 595 (HKHQLQDASR…YRLVPIPRAR (397 aa)) are Cytoplasmic-facing. Positions 286, 287, and 330 each coordinate Mg(2+). ATP contacts are provided by residues 286–291 (DIVGFT), 328–330 (LGD), and arginine 374. Residues 456–476 (DPRSQQPPPPSHHLSKPKGDA) are disordered. Positions 479 to 484 (KMRASV) are mediates regulation of adenylate cyclase activity by C5 alpha-induced G- beta and gamma pathway. The tract at residues 493–501 (WGAARPFAH) is mediates regulation of adenylate cyclase activity by sphingosine 1-phosphate-induced G alpha 13 pathway. The disordered stretch occupies residues 504–543 (HRESVSSSETPISNGRRQKAIPLRRHRAPDRSASPKGRLE). The span at 508–518 (VSSSETPISNG) shows a compositional bias: polar residues. The interval 508–585 (VSSSETPISN…IFLEKGFERE (78 aa)) is modulates adenylate cyclase activity by modulating the binding of G(s)alpha to the high-affinity G(s)alpha binding site in 7C1a/7C2. The span at 519-531 (RRQKAIPLRRHRA) shows a compositional bias: basic residues. The next 3 helical transmembrane spans lie at 596 to 616 (YDFA…LLVM), 621 to 641 (TLGV…SFCF), and 670 to 689 (LVLV…INMP). N-linked (GlcNAc...) asparagine glycosylation is present at asparagine 702. 3 helical membrane passes run 719–738 (LLPY…SVFL), 747–766 (MLLT…SPCW), and 813–833 (DLKI…ILLS). Residues 834–1099 (RQIDYYCRLD…TAKFQGLGLN (266 aa)) lie on the Cytoplasmic side of the membrane. Residues lysine 950, 1029-1031 (DIW), 1036-1040 (NVASR), and lysine 1076 contribute to the ATP site.

It belongs to the adenylyl cyclase class-4/guanylyl cyclase family. Mg(2+) serves as cofactor. Requires Mn(2+) as cofactor. In terms of processing, phosphorylated by PRKCD. Most abundant in heart, spleen and lung.

Its subcellular location is the membrane. It catalyses the reaction ATP = 3',5'-cyclic AMP + diphosphate. Its activity is regulated as follows. Activated by the G protein alpha subunit. Activated by the G protein beta and gamma subunit complex. Activated by GNA13 and GNA12. Ethanol and phorbol 12,13-dibutanoate significantly potentiate adenylate cyclase activity generated in response to the activation of the prostanoid receptor by the agonist prostaglandin E1(1-) in a PKC-dependent manner. Inhibited by lithium. Catalyzes the formation of cAMP in response to activation of G protein-coupled receptors. Functions in signaling cascades activated namely by thrombin and sphingosine 1-phosphate and mediates regulation of cAMP synthesis through synergistic action of the stimulatory G alpha protein with GNA13. Also, during inflammation, mediates zymosan-induced increase intracellular cAMP, leading to protein kinase A pathway activation in order to modulate innate immune responses through heterotrimeric G proteins G(12/13). Functions in signaling cascades activated namely by dopamine and C5 alpha chain and mediates regulation of cAMP synthesis through synergistic action of the stimulatory G protein with G beta:gamma complex. Functions, through cAMP response regulation, to keep inflammation under control during bacterial infection by sensing the presence of serum factors, such as the bioactive lysophospholipid (LPA) that regulate LPS-induced TNF-alpha production. However, it is also required for the optimal functions of B and T cells during adaptive immune responses by regulating cAMP synthesis in both B and T cells. The sequence is that of Adenylate cyclase type 7 from Mus musculus (Mouse).